A 361-amino-acid polypeptide reads, in one-letter code: NAD(P)H-quinone oxidoreductase subunit 1, chloroplastic (361 aa).

Transmembrane regions (helical) follow at residues 28–48 (IWVL…VLVI), 99–119 (FTIG…VIPF), 128–148 (LSIG…GLLM), 249–269 (YSGI…LVSS), 270–290 (LFVT…LFVP), 301–321 (TIIC…ISIA), and 341–361 (FLLP…LLSL).

Belongs to the complex I subunit 1 family. In terms of assembly, NDH is composed of at least 16 different subunits, 5 of which are encoded in the nucleus.

It localises to the plastid. The protein localises to the chloroplast thylakoid membrane. It catalyses the reaction a plastoquinone + NADH + (n+1) H(+)(in) = a plastoquinol + NAD(+) + n H(+)(out). It carries out the reaction a plastoquinone + NADPH + (n+1) H(+)(in) = a plastoquinol + NADP(+) + n H(+)(out). NDH shuttles electrons from NAD(P)H:plastoquinone, via FMN and iron-sulfur (Fe-S) centers, to quinones in the photosynthetic chain and possibly in a chloroplast respiratory chain. The immediate electron acceptor for the enzyme in this species is believed to be plastoquinone. Couples the redox reaction to proton translocation, and thus conserves the redox energy in a proton gradient. The polypeptide is NAD(P)H-quinone oxidoreductase subunit 1, chloroplastic (Jasminum nudiflorum (Winter jasmine)).